We begin with the raw amino-acid sequence, 308 residues long: Tetraacyldisaccharide 4'-kinase (308 aa).

Ser-63–Thr-70 serves as a coordination point for ATP.

It belongs to the LpxK family.

It carries out the reaction a lipid A disaccharide + ATP = a lipid IVA + ADP + H(+). It participates in glycolipid biosynthesis; lipid IV(A) biosynthesis; lipid IV(A) from (3R)-3-hydroxytetradecanoyl-[acyl-carrier-protein] and UDP-N-acetyl-alpha-D-glucosamine: step 6/6. In terms of biological role, transfers the gamma-phosphate of ATP to the 4'-position of a tetraacyldisaccharide 1-phosphate intermediate (termed DS-1-P) to form tetraacyldisaccharide 1,4'-bis-phosphate (lipid IVA). This Campylobacter jejuni (strain RM1221) protein is Tetraacyldisaccharide 4'-kinase.